A 507-amino-acid polypeptide reads, in one-letter code: MEILVPGRATLAQLEAIWREGRPARLAPEARPAVEAAAARVAEAAAGTAPVYGVNTGFGKLASLKIAPADTAQLQRNLILSHCCGVGEPMPPSTARLMMALKLLSLGRGASGVRWEIVALLEGMLAAGVTPVIPAQGSVGASGDLAPLAHMAAVMIGEGEAEVGGRRLPGAAALAEAGLAPVALGPKEGLALINGTQFSTAYALAGLFEGWRAAQAALVISALSTDAIMGSTAPLRPEIHALRGHAGQIEAAATMRALLEGSAIRESHREGDQRVQDPYCIRCQPQVTGAAMDVLRMAAGTLATEANAATDNPLVLSDGRIVSGGNFHAEPVGFAADMIALALSEIGAIAQRRVALMVDPTLSFDLPPFLTPEPGLNSGLMIAEVTTAALMSENKHMAAPTVTDSTPTSANQEDHVSMAAHGARRLGRMVENLAVILGTEAICAAQGVEFRAPLATSAPLGAVLARLRAEVPRLGADRILAPDLAAAARLVRTGALARAAGLPLPAL.

A cross-link (5-imidazolinone (Ala-Gly)) is located at residues 141–143 (ASG). Position 142 is a 2,3-didehydroalanine (Ser) (Ser-142).

Belongs to the PAL/histidase family. In terms of processing, contains an active site 4-methylidene-imidazol-5-one (MIO), which is formed autocatalytically by cyclization and dehydration of residues Ala-Ser-Gly.

The protein resides in the cytoplasm. The enzyme catalyses L-histidine = trans-urocanate + NH4(+). The protein operates within amino-acid degradation; L-histidine degradation into L-glutamate; N-formimidoyl-L-glutamate from L-histidine: step 1/3. The polypeptide is Histidine ammonia-lyase (Cereibacter sphaeroides (strain ATCC 17029 / ATH 2.4.9) (Rhodobacter sphaeroides)).